A 555-amino-acid chain; its full sequence is Developmental and secondary metabolism regulator veA (555 aa).

3 disordered regions span residues 1–23 (MATRPPLSPPVNETEHSVSRITR), 39–60 (ERARACGAGAKSSADRRPVDPP), and 234–533 (RRRG…TLLS). Residues 13-23 (ETEHSVSRITR) show a composition bias toward basic and acidic residues. One can recognise a Velvet domain in the interval 25–228 (GKRITYKLNV…AEQGCRVRIR (204 aa)). A Nuclear localization signal motif is present at residues 39–44 (ERARAC). Over residues 239–258 (KRSDDYDFDEERSHRGRIPD) the composition is skewed to basic and acidic residues. Positions 311-331 (AIPPAPAPAPPSSSTPTPVAP) are enriched in pro residues. Polar residues-rich tracts occupy residues 336–372 (RSSSYTSHLSFGATRTQYPAPQLPGTPQSATTPTQVY) and 380–389 (HARNPSTSTE). The interval 439-479 (QTPSNAAPSLPPIASISAEYSNNLPQPPSNLAPSPNREPRG) is PEST. 2 stretches are compositionally biased toward basic and acidic residues: residues 492 to 503 (RPHEDAFSHSER) and 519 to 533 (ADRRPSDVHRATLLS).

Belongs to the velvet family. VeA subfamily. As to quaternary structure, component of the heterotrimeric velvet complex composed of laeA, veA and velB; VeA acting as a bridging protein between laeA and velB.

The protein localises to the nucleus. It localises to the cytoplasm. Component of the velvet transcription factor complex that controls sexual/asexual developmental ratio in response to light, promoting sexual development in the darkness while stimulating asexual sporulation under illumination. The velvet complex hat acts as a global regulator for secondary metabolite gene expression. Increases spore dispersing capacity by impacting conidiophore architecture. The protein is Developmental and secondary metabolism regulator veA of Aspergillus niger (strain ATCC 1015 / CBS 113.46 / FGSC A1144 / LSHB Ac4 / NCTC 3858a / NRRL 328 / USDA 3528.7).